Here is a 402-residue protein sequence, read N- to C-terminus: uncharacterized protein (402 aa).

To M.genitalium MG148.

This is an uncharacterized protein from Caldicellulosiruptor sp. (strain Rt8B.4).